A 548-amino-acid polypeptide reads, in one-letter code: Adenine deaminase (548 aa).

Belongs to the metallo-dependent hydrolases superfamily. Adenine deaminase family. It depends on Mn(2+) as a cofactor.

It catalyses the reaction adenine + H2O + H(+) = hypoxanthine + NH4(+). This Borreliella afzelii (strain PKo) (Borrelia afzelii) protein is Adenine deaminase.